The primary structure comprises 395 residues: Homoserine O-acetyltransferase (395 aa).

Residues 65-363 (PIVLIEHALT…SPTGHDGFLI (299 aa)) enclose the AB hydrolase-1 domain. Catalysis depends on Ser160, which acts as the Nucleophile. Arg230 is a binding site for substrate. Catalysis depends on residues Asp328 and His358. Asp359 is a binding site for substrate.

This sequence belongs to the AB hydrolase superfamily. MetX family. As to quaternary structure, homodimer.

It is found in the cytoplasm. It catalyses the reaction L-homoserine + acetyl-CoA = O-acetyl-L-homoserine + CoA. It participates in amino-acid biosynthesis; L-methionine biosynthesis via de novo pathway; O-acetyl-L-homoserine from L-homoserine: step 1/1. Functionally, transfers an acetyl group from acetyl-CoA to L-homoserine, forming acetyl-L-homoserine. This chain is Homoserine O-acetyltransferase, found in Corynebacterium jeikeium (strain K411).